The chain runs to 432 residues: D-amino acid dehydrogenase (432 aa).

Position 3–17 (3–17) interacts with FAD; the sequence is VVILGSGVVGVASAW.

The protein belongs to the DadA oxidoreductase family. The cofactor is FAD.

The catalysed reaction is a D-alpha-amino acid + A + H2O = a 2-oxocarboxylate + AH2 + NH4(+). It participates in amino-acid degradation; D-alanine degradation; NH(3) and pyruvate from D-alanine: step 1/1. Oxidative deamination of D-amino acids. In Shigella boydii serotype 4 (strain Sb227), this protein is D-amino acid dehydrogenase.